Consider the following 502-residue polypeptide: MLHVNFTEEESLNTQALIVFIDDKLKLDSELINLDQQHHGLISKTIANKLQFTGKYGQIKIIPSVVKSGEVKYLVLAGLGSEEKLTEVKIEELGGKILQNVTNAKIATIGLKIKNRISNFTSSHVASLIASGALLASYRFDKYRTTLKEADKFVVESFEISTDNNAEATKLFEVKKLIAEGVFFTRDISNEPSNIKTPQIYAERIADILEELNVDVSILGEREMKNLGMGALLGVGQGSQNESKLVVMEYQGTNKDAPYIALVGKGVIFDTGGISLKPSNNMHLMRYDMCGSAAVVGTMIAVASQELPVNIVGVVGLVENMPSGNAQRPGDVVTTMSGQTAEVLNTDAEGRLVLADAVWYAQEKFKPKCVIDVATLTGAIVVSLGPTYAGCFSNNDELADKLIKAGEEVNEKLWRMPLHEDYDAMINSDIADMANIGNVPGAAGSSTAAHFIKRFIQEGVEWAHLDIAGVANSNKPSSLGPKGAVGYGVRLLEKFIKENYEQ.

Mn(2+) contacts are provided by Lys-265 and Asp-270. Lys-277 is a catalytic residue. Residues Asp-288, Asp-347, and Glu-349 each contribute to the Mn(2+) site. Arg-351 is a catalytic residue.

The protein belongs to the peptidase M17 family. The cofactor is Mn(2+).

It localises to the cytoplasm. The enzyme catalyses Release of an N-terminal amino acid, Xaa-|-Yaa-, in which Xaa is preferably Leu, but may be other amino acids including Pro although not Arg or Lys, and Yaa may be Pro. Amino acid amides and methyl esters are also readily hydrolyzed, but rates on arylamides are exceedingly low.. It carries out the reaction Release of an N-terminal amino acid, preferentially leucine, but not glutamic or aspartic acids.. In terms of biological role, presumably involved in the processing and regular turnover of intracellular proteins. Catalyzes the removal of unsubstituted N-terminal amino acids from various peptides. The sequence is that of Probable cytosol aminopeptidase from Rickettsia bellii (strain OSU 85-389).